A 225-amino-acid chain; its full sequence is NAD(P)H-quinone oxidoreductase subunit K, chloroplastic (225 aa).

Residues C43, C44, C108, and C139 each coordinate [4Fe-4S] cluster.

The protein belongs to the complex I 20 kDa subunit family. NDH is composed of at least 16 different subunits, 5 of which are encoded in the nucleus. It depends on [4Fe-4S] cluster as a cofactor.

The protein localises to the plastid. It is found in the chloroplast thylakoid membrane. It catalyses the reaction a plastoquinone + NADH + (n+1) H(+)(in) = a plastoquinol + NAD(+) + n H(+)(out). It carries out the reaction a plastoquinone + NADPH + (n+1) H(+)(in) = a plastoquinol + NADP(+) + n H(+)(out). Its function is as follows. NDH shuttles electrons from NAD(P)H:plastoquinone, via FMN and iron-sulfur (Fe-S) centers, to quinones in the photosynthetic chain and possibly in a chloroplast respiratory chain. The immediate electron acceptor for the enzyme in this species is believed to be plastoquinone. Couples the redox reaction to proton translocation, and thus conserves the redox energy in a proton gradient. The chain is NAD(P)H-quinone oxidoreductase subunit K, chloroplastic from Liriodendron tulipifera (Tuliptree).